The following is a 900-amino-acid chain: DNA mismatch repair protein MutS (900 aa).

ATP is bound at residue glycine 637–serine 644.

This sequence belongs to the DNA mismatch repair MutS family.

Functionally, this protein is involved in the repair of mismatches in DNA. It is possible that it carries out the mismatch recognition step. This protein has a weak ATPase activity. This Methanosarcina acetivorans (strain ATCC 35395 / DSM 2834 / JCM 12185 / C2A) protein is DNA mismatch repair protein MutS.